The following is a 775-amino-acid chain: Dipeptidyl peptidase 4 (775 aa).

Residues 1–15 (MKFLSLLLLAGIAQA) form the signal peptide. Asparagine 81, asparagine 111, asparagine 170, and asparagine 219 each carry an N-linked (GlcNAc...) asparagine glycan. Active-site charge relay system residues include serine 613, aspartate 690, and histidine 725.

It belongs to the peptidase S9B family.

Its subcellular location is the secreted. The enzyme catalyses Release of an N-terminal dipeptide, Xaa-Yaa-|-Zaa-, from a polypeptide, preferentially when Yaa is Pro, provided Zaa is neither Pro nor hydroxyproline.. Extracellular dipeptidyl-peptidase which removes N-terminal dipeptides sequentially from polypeptides having unsubstituted N-termini provided that the penultimate residue is proline. Contributes to pathogenicity. The chain is Dipeptidyl peptidase 4 (DPP4) from Trichophyton equinum (Horse ringworm fungus).